We begin with the raw amino-acid sequence, 912 residues long: Microtubule-associated protein 10 (912 aa).

6 disordered regions span residues valine 31–arginine 50, lysine 209–proline 239, glycine 254–threonine 296, alanine 335–glycine 366, serine 443–serine 469, and arginine 730–tyrosine 859. Residues valine 211–serine 229 are compositionally biased toward polar residues. Positions glycine 254 to serine 263 are enriched in basic and acidic residues. Residues threonine 266–glycine 295 show a composition bias toward polar residues. Residues glutamate 347–asparagine 362 show a composition bias toward low complexity. The segment covering cysteine 452–lysine 468 has biased composition (basic and acidic residues). The span at serine 735–leucine 768 shows a compositional bias: polar residues. A compositionally biased stretch (low complexity) spans glutamate 796 to tryptophan 807. Residues glycine 841–tyrosine 859 are compositionally biased toward polar residues.

Interacts (via middle region) with microtubules.

The protein resides in the cytoplasm. It localises to the cytoskeleton. Its subcellular location is the spindle pole. The protein localises to the microtubule organizing center. It is found in the centrosome. The protein resides in the midbody. Its function is as follows. Microtubule-associated protein (MAP) that plays a role in the regulation of cell division; promotes microtubule stability and participates in the organization of the spindle midzone and normal progress of cytokinesis. This Bos taurus (Bovine) protein is Microtubule-associated protein 10 (MAP10).